Here is a 281-residue protein sequence, read N- to C-terminus: Lectin (281 aa).

An N-terminal signal peptide occupies residues 1–26 (MATYKLCSVLALSLTLFLLILNKVNS). 2 N-linked (GlcNAc...) asparagine glycosylation sites follow: asparagine 43 and asparagine 139. A propeptide spanning residues 269 to 281 (AVIPTSNHNTFAI) is cleaved from the precursor.

The protein belongs to the leguminous lectin family. Homodimer. Post-translationally, a minor C-terminal proteolytic processing site is observed at position 268.

Functionally, galactose and N-acetyllactosamine specific lectin. Binds to the H-2 blood type determinant fucosyl-N-acetyllactosamine. This chain is Lectin, found in Erythrina corallodendron (Coral tree).